A 2254-amino-acid polypeptide reads, in one-letter code: Voltage-dependent T-type calcium channel subunit alpha-1G (2254 aa).

Positions 1-48 (MDEEEDGAGAEESGQPRSFTQLNDLSGAGGRQGPGSTEKDPGSADSEA) are disordered. Residues 1–80 (MDEEEDGAGA…RSWCLRTVCN (80 aa)) lie on the Cytoplasmic side of the membrane. Over residues 15–24 (QPRSFTQLND) the composition is skewed to polar residues. Residues 68–398 (SRPRSWCLRT…LCLVVIATQF (331 aa)) form an I repeat. A helical transmembrane segment spans residues 81–101 (PWFERVSMLVILLNCVTLGMF). Over 102 to 119 (RPCEDIACDSQRCRILQA) the chain is Extracellular. Residues 120–141 (FDDFIFAFFAVEMVVKMVALGI) traverse the membrane as a helical segment. Topologically, residues 142–150 (FGKKCYLGD) are cytoplasmic. A helical transmembrane segment spans residues 151–170 (TWNRLDFFIVIAGMLEYSLD). At 171 to 175 (LQNVS) the chain is on the extracellular side. Asn173 carries an N-linked (GlcNAc...) asparagine glycan. Residues 176–193 (FSAVRTVRVLRPLRAINR) form a helical membrane-spanning segment. Over 194 to 213 (VPSMRILVTLLLDTLPMLGN) the chain is Cytoplasmic. The chain crosses the membrane as a helical span at residues 214 to 234 (VLLLCFFVFFIFGIVGVQLWA). Residues 235-370 (GLLRNRCFLP…YFVMDAHSFY (136 aa)) lie on the Extracellular side of the membrane. Residues Asn246, Asn306, Asn310, and Asn322 are each glycosylated (N-linked (GlcNAc...) asparagine). Residues 371–395 (NFIYFILLIIVGSFFMINLCLVVIA) form a helical membrane-spanning segment. Residues 396 to 744 (TQFSETKQRE…DTFRKIVDSK (349 aa)) lie on the Cytoplasmic side of the membrane. Ser467 carries the post-translational modification Phosphoserine. Residues 494–506 (LVHHHHHHHHHYH) show a composition bias toward basic residues. Disordered stretches follow at residues 494-513 (LVHH…GTLR), 525-553 (DANG…AESV), 579-598 (ASGR…TSPP), and 699-721 (DAQH…GPDA). Over residues 534 to 545 (LPPPSTPTPSGG) the composition is skewed to pro residues. Residue Ser716 is modified to Phosphoserine. Residues 730–968 (WRLICDTFRK…LLVAILVEGF (239 aa)) form an II repeat. The chain crosses the membrane as a helical span at residues 745 to 765 (YFGRGIMIAILVNTLSMGIEY). Residues 766 to 778 (HEQPEELTNALEI) are Extracellular-facing. A helical transmembrane segment spans residues 779–800 (SNIVFTSLFALEMLLKLLVYGP). Residues 801-806 (FGYIKN) lie on the Cytoplasmic side of the membrane. The helical transmembrane segment at 807 to 825 (PYNIFDGVIVVISVWEIVG) threads the bilayer. Residues 826–833 (QQGGGLSV) lie on the Extracellular side of the membrane. Residues 834 to 857 (LRTFRLMRVLKLVRFLPALQRQLV) traverse the membrane as a helical segment. The Cytoplasmic portion of the chain corresponds to 858-868 (VLMKTMDNVAT). A helical membrane pass occupies residues 869–889 (FCMLLMLFIFIFSILGMHLFG). The Extracellular portion of the chain corresponds to 890–940 (CKFASERDGDTLPDRKNFDSLLWAIVTVFQILTQEDWNKVLYNGMASTSSW). The helical transmembrane segment at 941–965 (AALYFIALMTFGNYVLFNLLVAILV) threads the bilayer. Residues 966-1251 (EGFQAEGDAT…SRFRLLCHRI (286 aa)) lie on the Cytoplasmic side of the membrane. Residues 1024–1209 (TPMSHPKSSS…GDDDNDEGNL (186 aa)) form a disordered region. Low complexity-rich tracts occupy residues 1041–1052 (GSGSRRTSSSGS) and 1065–1091 (PPSA…SRNS). Composition is skewed to acidic residues over residues 1117–1126 (ESQDEEESSE) and 1196–1206 (PQLDGDDDNDE). 3 positions are modified to phosphoserine: Ser1118, Ser1124, and Ser1125. Residues 1242–1519 (SRFRLLCHRI…MFVGVVVENF (278 aa)) form an III repeat. Residues 1252-1274 (ITHKMFDHVVLVIIFLNCITIAM) traverse the membrane as a helical segment. Topologically, residues 1275–1292 (ERPKIDPHSAERIFLTLS) are extracellular. The helical transmembrane segment at 1293–1313 (NYIFTAVFLAEMTVKVVALGW) threads the bilayer. Topologically, residues 1314–1323 (CFGEQAYLRS) are cytoplasmic. The chain crosses the membrane as a helical span at residues 1324-1343 (SWNVLDGLLVLISVIDILVS). Residues 1344–1357 (MVSDSGTKILGMLR) lie on the Extracellular side of the membrane. The helical transmembrane segment at 1358 to 1379 (VLRLLRTLRPLRVISRAQGLKL) threads the bilayer. At 1380–1389 (VVETLMSSLK) the chain is on the cytoplasmic side. The helical transmembrane segment at 1390 to 1413 (PIGNIVVICCAFFIIFGILGVQLF) threads the bilayer. Over 1414–1490 (KGKFFVCQGE…DQQPIMNHNP (77 aa)) the chain is Extracellular. 2 N-linked (GlcNAc...) asparagine glycosylation sites follow: Asn1427 and Asn1430. Residues 1491–1516 (WMLLYFISFLLIVAFFVLNMFVGVVV) form a helical membrane-spanning segment. The Cytoplasmic segment spans residues 1517–1578 (ENFHKCRQHQ…RLLVHHLCTS (62 aa)). An IV repeat occupies 1564–1822 (DYSRFRLLVH…VVIAVLMKHL (259 aa)). A helical membrane pass occupies residues 1579-1599 (HYLDLFITGVIGLNVVTMAME). Over 1600-1613 (HYQQPQILDEALKI) the chain is Extracellular. A helical transmembrane segment spans residues 1614 to 1635 (CNYIFTVIFVFESVFKLVAFGF). The Cytoplasmic portion of the chain corresponds to 1636-1642 (RRFFQDR). Residues 1643–1661 (WNQLDLAIVLLSIMGITLE) form a helical membrane-spanning segment. The Extracellular segment spans residues 1662 to 1675 (EIEVNLSLPINPTI). Asn1666 is a glycosylation site (N-linked (GlcNAc...) asparagine). Residues 1676 to 1699 (IRIMRVLRIARVLKLLKMAVGMRA) traverse the membrane as a helical segment. Residues 1700–1713 (LLHTVMQALPQVGN) lie on the Cytoplasmic side of the membrane. A helical transmembrane segment spans residues 1714-1734 (LGLLFMLLFFIFAALGVELFG). At 1735-1794 (DLECDETHPCEGLGRHATFRNFGMAFLTLFRVSTGDNWNGIMKDTLRDCDQESTCYNTVI) the chain is on the extracellular side. A helical transmembrane segment spans residues 1795–1822 (SPIYFVSFVLTAQFVLVNVVIAVLMKHL). The Cytoplasmic portion of the chain corresponds to 1823–2254 (EESNKEAKEE…LSSDPTDMDP (432 aa)). A disordered region spans residues 2153–2254 (DSGSQPRLCP…LSSDPTDMDP (102 aa)). The span at 2184-2193 (SPPSISIDPP) shows a compositional bias: low complexity. 2 stretches are compositionally biased toward polar residues: residues 2220-2232 (PSVS…TAAS) and 2240-2254 (LSLS…DMDP).

It belongs to the calcium channel alpha-1 subunit (TC 1.A.1.11) family. CACNA1G subfamily. In response to raising of intracellular calcium, the T-type channels are activated by CaM-kinase II. In terms of tissue distribution, highly expressed in brain. Moderate expression in heart; low expression in placenta, kidney and lung.

The protein localises to the cell membrane. Its subcellular location is the cytoplasm. It carries out the reaction Ca(2+)(in) = Ca(2+)(out). Its function is as follows. Voltage-sensitive calcium channels (VSCC) mediate the entry of calcium ions into excitable cells and are also involved in a variety of calcium-dependent processes, including muscle contraction, hormone or neurotransmitter release, gene expression, cell motility, cell division and cell death. The isoform alpha-1G gives rise to T-type calcium currents. T-type calcium channels belong to the 'low-voltage activated (LVA)' group and are strongly blocked by nickel and mibefradil. A particularity of this type of channels is an opening at quite negative potentials and a voltage-dependent inactivation. T-type channels serve pacemaking functions in both central neurons and cardiac nodal cells and support calcium signaling in secretory cells and vascular smooth muscle. They may also be involved in the modulation of firing patterns of neurons which is important for information processing as well as in cell growth processes. The polypeptide is Voltage-dependent T-type calcium channel subunit alpha-1G (Cacna1g) (Rattus norvegicus (Rat)).